We begin with the raw amino-acid sequence, 185 residues long: Ribosome-recycling factor (185 aa).

The segment at 141-160 (RIQKDGEAGEDEVGRAEKEL) is disordered.

The protein belongs to the RRF family.

It localises to the cytoplasm. Its function is as follows. Responsible for the release of ribosomes from messenger RNA at the termination of protein biosynthesis. May increase the efficiency of translation by recycling ribosomes from one round of translation to another. The chain is Ribosome-recycling factor from Rhodococcus jostii (strain RHA1).